Here is a 312-residue protein sequence, read N- to C-terminus: uncharacterized protein (312 aa).

10 helical membrane passes run 13–33 (AAGT…SIWI), 45–65 (AVLL…FLIY), 81–101 (ACGA…IGLN), 105–125 (AMVE…FTAC), 133–153 (IQDL…LGGW), 162–182 (MIGA…LVLS), 198–218 (GMTA…AAGM), 229–249 (MYGL…VLML), 260–280 (AAAI…LFLG), and 283–303 (LGLI…GMEY). Residues 173 to 303 (AVYAGYLVLS…VFFVITGMEY (131 aa)) enclose the EamA domain.

This sequence belongs to the EamA transporter family.

The protein resides in the cell membrane. This is an uncharacterized protein from Bacillus subtilis (strain 168).